Consider the following 157-residue polypeptide: 2-C-methyl-D-erythritol 2,4-cyclodiphosphate synthase (157 aa).

A divalent metal cation contacts are provided by Asp8 and His10. 4-CDP-2-C-methyl-D-erythritol 2-phosphate-binding positions include 8 to 10 (DVH) and 34 to 35 (HS). His42 lines the a divalent metal cation pocket. 4-CDP-2-C-methyl-D-erythritol 2-phosphate is bound by residues 56–58 (DIG), 61–65 (FPDTD), 100–106 (AQAPKMA), 132–135 (TTTE), Phe139, and Arg142.

It belongs to the IspF family. In terms of assembly, homotrimer. The cofactor is a divalent metal cation.

The enzyme catalyses 4-CDP-2-C-methyl-D-erythritol 2-phosphate = 2-C-methyl-D-erythritol 2,4-cyclic diphosphate + CMP. It participates in isoprenoid biosynthesis; isopentenyl diphosphate biosynthesis via DXP pathway; isopentenyl diphosphate from 1-deoxy-D-xylulose 5-phosphate: step 4/6. In terms of biological role, involved in the biosynthesis of isopentenyl diphosphate (IPP) and dimethylallyl diphosphate (DMAPP), two major building blocks of isoprenoid compounds. Catalyzes the conversion of 4-diphosphocytidyl-2-C-methyl-D-erythritol 2-phosphate (CDP-ME2P) to 2-C-methyl-D-erythritol 2,4-cyclodiphosphate (ME-CPP) with a corresponding release of cytidine 5-monophosphate (CMP). The protein is 2-C-methyl-D-erythritol 2,4-cyclodiphosphate synthase of Pseudomonas fluorescens (strain Pf0-1).